The following is a 78-amino-acid chain: Polcalcin Phl p 7 (78 aa).

2 consecutive EF-hand domains span residues 1 to 35 (MADD…LGST) and 35 to 70 (TSAD…NPGL). The Ca(2+) site is built by Asp-13, Asn-15, Asp-17, Lys-19, Glu-24, Asp-48, Asp-50, Asp-52, and Glu-59.

As to quaternary structure, monomer. Specifically expressed in pollen.

In terms of biological role, may be involved in the regulation of pollen-tube growth. This Phleum pratense (Common timothy) protein is Polcalcin Phl p 7.